Reading from the N-terminus, the 201-residue chain is MMLSDNDIIKEIDSGGLVIEPFNKEFVGPCSYDITLGDEFIVYTDEVYDLKKELNHNKFKIENSIMVCPLCYELDDEKIEYFKNKYGVDVVVKGGLLGTTTEFVELPNDICAQYQGRSSFGRVFLQSHQTAGWIDAGFKGKITLEIVAYDKPVILYKNQRIGQLIFSKTLTPANIGYCDRKGSKYGGQNSVNASLIHKDEI.

Residues 117 to 122 (RSSFGR), Asp-135, 143 to 145 (TLE), Gln-163, Tyr-177, and Gln-188 contribute to the dCTP site. Glu-145 (proton donor/acceptor) is an active-site residue.

Belongs to the dCTP deaminase family. In terms of assembly, homotrimer.

The catalysed reaction is dCTP + 2 H2O = dUMP + NH4(+) + diphosphate. It functions in the pathway pyrimidine metabolism; dUMP biosynthesis; dUMP from dCTP: step 1/1. Its function is as follows. Bifunctional enzyme that catalyzes both the deamination of dCTP to dUTP and the hydrolysis of dUTP to dUMP without releasing the toxic dUTP intermediate. In Methanococcus aeolicus (strain ATCC BAA-1280 / DSM 17508 / OCM 812 / Nankai-3), this protein is dCTP deaminase, dUMP-forming.